Here is a 634-residue protein sequence, read N- to C-terminus: 3-dehydroshikimate dehydratase (634 aa).

A divalent metal cation contacts are provided by Glu-134, Asp-165, Gln-191, and Glu-239. 2 consecutive VOC domains span residues Gly-295–Arg-414 and Arg-440–Glu-590. Mg(2+)-binding residues include His-443, His-521, and Glu-599.

This sequence belongs to the bacterial two-domain DSD family. In terms of assembly, homodimer. Requires Co(2+) as cofactor. Ni(2+) is required as a cofactor. Mg(2+) serves as cofactor. The cofactor is Mn(2+).

It carries out the reaction 3-dehydroshikimate = 3,4-dihydroxybenzoate + H2O. Its pathway is aromatic compound metabolism; 3,4-dihydroxybenzoate biosynthesis. In terms of biological role, catalyzes the conversion of 3-dehydroshikimate to protocatechuate (3,4-dihydroxybenzoate), a common intermediate of quinate and shikimate degradation pathways. Is required for growth on either quinate or shikimate as a sole carbon source. This Pseudomonas aeruginosa (strain ATCC 15692 / DSM 22644 / CIP 104116 / JCM 14847 / LMG 12228 / 1C / PRS 101 / PAO1) protein is 3-dehydroshikimate dehydratase.